The sequence spans 595 residues: Inactive serine/threonine-protein kinase PLK5 (595 aa).

In terms of domain architecture, Protein kinase spans 27 to 279 (YRRGKLIGKG…LDHLLQDDFF (253 aa)). ATP-binding positions include 33-41 (IGKGAFSRC) and Lys56. Residue Asp150 is the Proton acceptor of the active site. The disordered stretch occupies residues 326-350 (FTSKEASGPGEEGTEPDHMEAGNEE). Residues 340-350 (EPDHMEAGNEE) are compositionally biased toward basic and acidic residues. 2 POLO box domains span residues 413-491 (WAPK…YMQR) and 509-595 (DISL…LQSV).

This sequence belongs to the protein kinase superfamily. Ser/Thr protein kinase family. CDC5/Polo subfamily. As to expression, expressed in the cerebellum, eye and brain cortex (at protein level). Expressed in highly differentiated tissues, such as brain, eyes and ovary. Not detectable in proliferating tissues, such as the colon, spleen and placenta.

It is found in the nucleus. The protein resides in the nucleolus. Its subcellular location is the cytoplasm. Functionally, inactive serine/threonine-protein kinase that plays a role in cell cycle progression and neuronal differentiation. The sequence is that of Inactive serine/threonine-protein kinase PLK5 from Mus musculus (Mouse).